Reading from the N-terminus, the 85-residue chain is MANIKSAIKRAKLSEERRAHNASIKSDMRSAVKTVEALVTNNDLENAKEAFKTASKKLDKAARKGLIHQNAASRQKSRLAKQVNA.

Disordered regions lie at residues 1–25 and 62–85; these read MANI…ASIK and ARKG…QVNA.

This sequence belongs to the bacterial ribosomal protein bS20 family.

Binds directly to 16S ribosomal RNA. This Bacillus cereus (strain G9842) protein is Small ribosomal subunit protein bS20.